Consider the following 289-residue polypeptide: 2,3-dimethylmalate lyase (289 aa).

It belongs to the isocitrate lyase/PEP mutase superfamily. Homotetramer. The cofactor is Mg(2+).

It carries out the reaction (2R,3S)-2,3-dimethylmalate = propanoate + pyruvate. It participates in cofactor degradation; nicotinate degradation; propanoate and pyruvate from 6-hydroxynicotinate: step 8/8. Its activity is regulated as follows. Completely inhibited by propionic anhydride and by cystamine. Irreversibly inhibited by the mercapto reagents iodoacetate and iodoacetamide. Unaffected by hydroxylamine. Functionally, catalyzes the formation of proponate and pyruvate from (2R,3S)-2,3-dimethylmalate. Has no activity toward dimethylmaleate, malate, citramalate, isocitrate and citrate. The polypeptide is 2,3-dimethylmalate lyase (Eubacterium barkeri (Clostridium barkeri)).